The following is a 37-amino-acid chain: Cytochrome b6-f complex subunit 5 (37 aa).

The chain crosses the membrane as a helical span at residues 5–25 (FLFGIVLGLIPITLAGLFVTA).

It belongs to the PetG family. In terms of assembly, the 4 large subunits of the cytochrome b6-f complex are cytochrome b6, subunit IV (17 kDa polypeptide, PetD), cytochrome f and the Rieske protein, while the 4 small subunits are PetG, PetL, PetM and PetN. The complex functions as a dimer.

The protein localises to the plastid thylakoid membrane. Its function is as follows. Component of the cytochrome b6-f complex, which mediates electron transfer between photosystem II (PSII) and photosystem I (PSI), cyclic electron flow around PSI, and state transitions. PetG is required for either the stability or assembly of the cytochrome b6-f complex. The chain is Cytochrome b6-f complex subunit 5 from Cuscuta reflexa (Southern Asian dodder).